Here is a 424-residue protein sequence, read N- to C-terminus: UPF0597 protein Sbal223_1296 (424 aa).

Belongs to the UPF0597 family.

This Shewanella baltica (strain OS223) protein is UPF0597 protein Sbal223_1296.